The primary structure comprises 336 residues: tRNA N6-adenosine threonylcarbamoyltransferase (336 aa).

Positions 111 and 115 each coordinate Fe cation. Substrate is bound by residues 134–138, aspartate 167, glycine 180, and asparagine 270; that span reads LVSGG. Aspartate 298 provides a ligand contact to Fe cation.

This sequence belongs to the KAE1 / TsaD family. It depends on Fe(2+) as a cofactor.

It is found in the cytoplasm. It carries out the reaction L-threonylcarbamoyladenylate + adenosine(37) in tRNA = N(6)-L-threonylcarbamoyladenosine(37) in tRNA + AMP + H(+). Functionally, required for the formation of a threonylcarbamoyl group on adenosine at position 37 (t(6)A37) in tRNAs that read codons beginning with adenine. Is involved in the transfer of the threonylcarbamoyl moiety of threonylcarbamoyl-AMP (TC-AMP) to the N6 group of A37, together with TsaE and TsaB. TsaD likely plays a direct catalytic role in this reaction. The chain is tRNA N6-adenosine threonylcarbamoyltransferase from Acinetobacter baumannii (strain SDF).